The sequence spans 154 residues: Transcriptional repressor NrdR (154 aa).

The segment at Cys3–Cys34 is a zinc-finger region. In terms of domain architecture, ATP-cone spans Val46–Asp136.

This sequence belongs to the NrdR family. Zn(2+) is required as a cofactor.

Negatively regulates transcription of bacterial ribonucleotide reductase nrd genes and operons by binding to NrdR-boxes. The sequence is that of Transcriptional repressor NrdR from Mycobacterium leprae (strain Br4923).